Consider the following 489-residue polypeptide: UDP-N-acetylmuramoyl-L-alanyl-D-glutamate--2,6-diaminopimelate ligase (489 aa).

S30 provides a ligand contact to UDP-N-acetyl-alpha-D-muramoyl-L-alanyl-D-glutamate. G108–T114 provides a ligand contact to ATP. UDP-N-acetyl-alpha-D-muramoyl-L-alanyl-D-glutamate-binding positions include N149, T150–T151, S177, Q183, and R185. Residue K217 is modified to N6-carboxylysine. Residues R383, D407–R410, G459, and E463 contribute to the meso-2,6-diaminopimelate site. The Meso-diaminopimelate recognition motif motif lies at D407–R410.

The protein belongs to the MurCDEF family. MurE subfamily. Requires Mg(2+) as cofactor. In terms of processing, carboxylation is probably crucial for Mg(2+) binding and, consequently, for the gamma-phosphate positioning of ATP.

The protein resides in the cytoplasm. It catalyses the reaction UDP-N-acetyl-alpha-D-muramoyl-L-alanyl-D-glutamate + meso-2,6-diaminopimelate + ATP = UDP-N-acetyl-alpha-D-muramoyl-L-alanyl-gamma-D-glutamyl-meso-2,6-diaminopimelate + ADP + phosphate + H(+). The protein operates within cell wall biogenesis; peptidoglycan biosynthesis. Catalyzes the addition of meso-diaminopimelic acid to the nucleotide precursor UDP-N-acetylmuramoyl-L-alanyl-D-glutamate (UMAG) in the biosynthesis of bacterial cell-wall peptidoglycan. The polypeptide is UDP-N-acetylmuramoyl-L-alanyl-D-glutamate--2,6-diaminopimelate ligase (Geobacillus thermodenitrificans (strain NG80-2)).